We begin with the raw amino-acid sequence, 312 residues long: Olfactory receptor 8H3 (312 aa).

Topologically, residues 1–26 (MMGRRNDTNVADFILTGLSDSEEVQM) are extracellular. Asparagine 6 is a glycosylation site (N-linked (GlcNAc...) asparagine). The helical transmembrane segment at 27-47 (ALFMLFLLIYLITMLGNVGML) threads the bilayer. Topologically, residues 48-55 (LIIRLDLQ) are cytoplasmic. A helical transmembrane segment spans residues 56 to 76 (LHTPMYFFLTHLSFIDLSYST). Over 77–99 (VVTPKTLANLLTSNYISFTGCFA) the chain is Extracellular. Cysteines 97 and 189 form a disulfide. The chain crosses the membrane as a helical span at residues 100 to 120 (QMFCFVFLGTAECYLLSSMAY). Over 121 to 139 (DRYAAICSPLHYTVIMPKR) the chain is Cytoplasmic. Residues 140–160 (LCLALITGPYVIGFMDSFVNV) form a helical membrane-spanning segment. Over 161-197 (VSMSRLHFCDSNIIHHFFCDTSPILALSCTDTDNTEM) the chain is Extracellular. A helical membrane pass occupies residues 198–217 (LIFIIAGSTLMVSLITISAS). Over 218–237 (YVSILSTILKINSTSGKQKA) the chain is Cytoplasmic. A helical transmembrane segment spans residues 238-258 (FSTCVSHLLGVTIFYGTMIFT). Residues 259–271 (YLKPRKSYSLGRD) are Extracellular-facing. A helical transmembrane segment spans residues 272-292 (QVAPVFYTIVIPMLNPLIYSL). Residues 293-312 (RNREVKNALIRVMQRRQDSR) are Cytoplasmic-facing.

It belongs to the G-protein coupled receptor 1 family.

The protein resides in the cell membrane. In terms of biological role, odorant receptor. In Homo sapiens (Human), this protein is Olfactory receptor 8H3 (OR8H3).